Reading from the N-terminus, the 232-residue chain is Putative homeobox protein NANOG2 (232 aa).

The disordered stretch occupies residues 1 to 39 (MDLPIQDSHDSSTSPKGKQPTTAEKSATKKEDKVPVKKQ). Positions 11 to 25 (SSTSPKGKQPTTAEK) are enriched in polar residues. The segment covering 26–35 (SATKKEDKVP) has biased composition (basic and acidic residues). 8 consecutive repeat copies span residues 123 to 127 (WSNQT), 128 to 132 (WNNST), 133 to 137 (WSNQT), 143 to 147 (WSNHS), 148 to 152 (WNTQT), 153 to 157 (WCTQS), 158 to 162 (WNNQA), and 163 to 167 (WNSPF). Positions 123–167 (WSNQTWNNSTWSNQTQNIQSWSNHSWNTQTWCTQSWNNQAWNSPF) are 8 X repeats starting with a Trp in each unit. A sufficient for transactivation activity region spans residues 123–167 (WSNQTWNNSTWSNQTQNIQSWSNHSWNTQTWCTQSWNNQAWNSPF). Positions 168–232 (YNCGEESLQS…YSMNMQPEDV (65 aa)) are sufficient for strong transactivation activity.

This sequence belongs to the Nanog homeobox family.

It is found in the nucleus. Its function is as follows. Probable transcriptional regulator. The sequence is that of Putative homeobox protein NANOG2 (NANOGP1) from Homo sapiens (Human).